Here is a 268-residue protein sequence, read N- to C-terminus: Tryptophan synthase alpha chain (268 aa).

Catalysis depends on proton acceptor residues glutamate 49 and aspartate 60.

Belongs to the TrpA family. In terms of assembly, tetramer of two alpha and two beta chains.

The enzyme catalyses (1S,2R)-1-C-(indol-3-yl)glycerol 3-phosphate + L-serine = D-glyceraldehyde 3-phosphate + L-tryptophan + H2O. It functions in the pathway amino-acid biosynthesis; L-tryptophan biosynthesis; L-tryptophan from chorismate: step 5/5. The alpha subunit is responsible for the aldol cleavage of indoleglycerol phosphate to indole and glyceraldehyde 3-phosphate. This Escherichia coli (strain SMS-3-5 / SECEC) protein is Tryptophan synthase alpha chain.